The primary structure comprises 504 residues: MDYVNRNLDDKLLCGICGKYFSDDESLREHRRQRHMTCHMCLLCNRRIPENETLREHMKNKHNIWKLFICVCCNWSFGTEIYLKCHEECMKSTGRPGLLKPLAMPMTAPAREASALNTDPQNGSDDVPHSSPSPVPMIAENSIIQASSLKMEPIESADRSSASTSTPRTLVSGTPREKIPCGFCGKDFFHEGSLREHRRRFHMTGHTCLLCNRQIPENETVRDHMKSQHNIKKVYNCLCCNWTFLNQVHLISHKTCLKQTGKPCCRPGHMEPLAIPRTASIRQFFTLKTETQSGDDDSAAGSQLFSARLSCKSCGKFFYSERSLSKHHRQIHMSGHVCVLCNHQMPKTVTVQEHMEKEHNIRLVFNCRCCNWSFATRRCLMSHVECLKKAGDARNVKPVAIPRMAADSILQSLKESEAQEYPDFSAASTTSSGPASTLKTPRMDFKKNLKICTDAVQILVGNGLFSNEQLAQTETWVMIFSNANKLFHSMNSFGEPSVSRDIPM.

2 consecutive C2H2-type zinc fingers follow at residues Leu12–His35 and His39–His62. A C2H2-type 3; degenerate zinc finger spans residues Phe68–Lys91. Disordered stretches follow at residues Ala115–Pro136 and Ile154–Gly173. Residues Arg159–Ser172 show a composition bias toward polar residues. C2H2-type zinc fingers lie at residues Ile179–His202 and His206–His229. The C2H2-type 6; degenerate zinc-finger motif lies at Tyr235–Lys258. Residues Leu309 to His332 form a C2H2-type 7 zinc finger. A C2H2-type 8; degenerate zinc finger spans residues Phe365–Lys389.

Expressed in proximal gonad.

In terms of biological role, possible transcriptional regulator. Involved in promoting segregation of chromosomes during meiosis, perhaps acting downstream of the let-60 RAS / mpk-1 MAPK signaling pathway. This chain is Paired zinc finger protein 1, found in Caenorhabditis elegans.